Here is a 372-residue protein sequence, read N- to C-terminus: Saccharopine dehydrogenase [NAD(+), L-lysine-forming] (372 aa).

Residues arginine 17 and lysine 76 each contribute to the L-saccharopine site. Lysine 76 acts as the Proton acceptor in catalysis. Histidine 95 acts as the Proton donor in catalysis. Glutamine 100 lines the L-saccharopine pocket. An NAD(+)-binding site is contributed by arginine 129. Residues arginine 130 and phenylalanine 134 each contribute to the L-saccharopine site. Residues 202–203 (GR), aspartate 226, threonine 230, tyrosine 250, and valine 277 each bind NAD(+). Cysteine 204 and cysteine 248 are oxidised to a cystine. 278-280 (SAD) is a binding site for L-saccharopine. 317 to 320 (IDHL) contributes to the NAD(+) binding site. Residues 370-372 (SKL) carry the Microbody targeting signal motif.

This sequence belongs to the AlaDH/PNT family. Monomer.

It is found in the peroxisome. It catalyses the reaction L-saccharopine + NAD(+) + H2O = L-lysine + 2-oxoglutarate + NADH + H(+). It functions in the pathway amino-acid biosynthesis; L-lysine biosynthesis via AAA pathway; L-lysine from L-alpha-aminoadipate (fungal route): step 3/3. Catalyzes the NAD(+)-dependent cleavage of saccharopine to L-lysine and 2-oxoglutarate, the final step in the alpha-aminoadipate (AAA) pathway for lysin biosynthesis. The chain is Saccharopine dehydrogenase [NAD(+), L-lysine-forming] (LYS1) from Candida glabrata (strain ATCC 2001 / BCRC 20586 / JCM 3761 / NBRC 0622 / NRRL Y-65 / CBS 138) (Yeast).